The chain runs to 1358 residues: DNA-directed RNA polymerase subunit beta (1358 aa).

The protein belongs to the RNA polymerase beta chain family. The RNAP catalytic core consists of 2 alpha, 1 beta, 1 beta' and 1 omega subunit. When a sigma factor is associated with the core the holoenzyme is formed, which can initiate transcription.

It catalyses the reaction RNA(n) + a ribonucleoside 5'-triphosphate = RNA(n+1) + diphosphate. In terms of biological role, DNA-dependent RNA polymerase catalyzes the transcription of DNA into RNA using the four ribonucleoside triphosphates as substrates. The sequence is that of DNA-directed RNA polymerase subunit beta from Francisella tularensis subsp. holarctica (strain FTNF002-00 / FTA).